The sequence spans 320 residues: BTB and MATH domain-containing protein 36 (320 aa).

The region spanning 7 to 136 (KGSIRFEIQN…DKHAVLEVQI (130 aa)) is the MATH domain. Residues 160 to 227 (TDVVLVLEGK…IYPTHMLINS (68 aa)) enclose the BTB domain.

In Caenorhabditis elegans, this protein is BTB and MATH domain-containing protein 36 (bath-36).